The primary structure comprises 184 residues: Photosystem I assembly protein Ycf4 (184 aa).

Transmembrane regions (helical) follow at residues 22–42 and 57–77; these read FCWA…GISS and IIFF…LFIS.

This sequence belongs to the Ycf4 family.

The protein localises to the plastid. It localises to the chloroplast thylakoid membrane. Functionally, seems to be required for the assembly of the photosystem I complex. The chain is Photosystem I assembly protein Ycf4 from Ipomoea purpurea (Common morning glory).